We begin with the raw amino-acid sequence, 87 residues long: Small ribosomal subunit protein bS20 (87 aa).

Basic residues predominate over residues 1 to 15 (MANHKSAMKRIKQTA). Residues 1 to 27 (MANHKSAMKRIKQTAKRTERNKHERST) are disordered. A compositionally biased stretch (basic and acidic residues) spans 16–27 (KRTERNKHERST).

It belongs to the bacterial ribosomal protein bS20 family.

Its function is as follows. Binds directly to 16S ribosomal RNA. The sequence is that of Small ribosomal subunit protein bS20 from Citrifermentans bemidjiense (strain ATCC BAA-1014 / DSM 16622 / JCM 12645 / Bem) (Geobacter bemidjiensis).